The chain runs to 338 residues: Ketol-acid reductoisomerase (NADP(+)) (338 aa).

Positions 1–181 constitute a KARI N-terminal Rossmann domain; that stretch reads MKVFYDKDCD…GGGKAGIIET (181 aa). NADP(+) is bound by residues 24–27, R47, and S52; that span reads YGSQ. The active site involves H107. G133 contacts NADP(+). The region spanning 182-327 is the KARI C-terminal knotted domain; that stretch reads NFKEETETDL…AQLRAMMPWI (146 aa). Mg(2+) is bound by residues D190, E194, E226, and E230. S251 is a binding site for substrate.

The protein belongs to the ketol-acid reductoisomerase family. The cofactor is Mg(2+).

The enzyme catalyses (2R)-2,3-dihydroxy-3-methylbutanoate + NADP(+) = (2S)-2-acetolactate + NADPH + H(+). It catalyses the reaction (2R,3R)-2,3-dihydroxy-3-methylpentanoate + NADP(+) = (S)-2-ethyl-2-hydroxy-3-oxobutanoate + NADPH + H(+). Its pathway is amino-acid biosynthesis; L-isoleucine biosynthesis; L-isoleucine from 2-oxobutanoate: step 2/4. It functions in the pathway amino-acid biosynthesis; L-valine biosynthesis; L-valine from pyruvate: step 2/4. Its function is as follows. Involved in the biosynthesis of branched-chain amino acids (BCAA). Catalyzes an alkyl-migration followed by a ketol-acid reduction of (S)-2-acetolactate (S2AL) to yield (R)-2,3-dihydroxy-isovalerate. In the isomerase reaction, S2AL is rearranged via a Mg-dependent methyl migration to produce 3-hydroxy-3-methyl-2-ketobutyrate (HMKB). In the reductase reaction, this 2-ketoacid undergoes a metal-dependent reduction by NADPH to yield (R)-2,3-dihydroxy-isovalerate. The chain is Ketol-acid reductoisomerase (NADP(+)) from Paracidovorax citrulli (strain AAC00-1) (Acidovorax citrulli).